The sequence spans 220 residues: Adenylate kinase (220 aa).

10–15 serves as a coordination point for ATP; that stretch reads GAGKGT. Positions 30 to 59 are NMP; that stretch reads STGDMLRAAVKAGTPLGLKAKEVMDGGNLV. AMP-binding positions include Thr-31, Arg-36, 57-59, 85-88, and Gln-92; these read NLV and GFPR. The segment at 122–159 is LID; sequence GRRVHPASGRTYHIRFNPPQTAGMDDETGEPLVQRADD. Residues Arg-123 and 132-133 each bind ATP; that span reads TY. AMP-binding residues include Arg-156 and Arg-167. Gly-205 provides a ligand contact to ATP.

This sequence belongs to the adenylate kinase family. Monomer.

The protein resides in the cytoplasm. It carries out the reaction AMP + ATP = 2 ADP. It functions in the pathway purine metabolism; AMP biosynthesis via salvage pathway; AMP from ADP: step 1/1. In terms of biological role, catalyzes the reversible transfer of the terminal phosphate group between ATP and AMP. Plays an important role in cellular energy homeostasis and in adenine nucleotide metabolism. The sequence is that of Adenylate kinase from Chlorobium luteolum (strain DSM 273 / BCRC 81028 / 2530) (Pelodictyon luteolum).